Here is a 334-residue protein sequence, read N- to C-terminus: Phenazine-1-carboxylate N-methyltransferase (334 aa).

Positions 198 and 241 each coordinate S-adenosyl-L-methionine.

The protein belongs to the class I-like SAM-binding methyltransferase superfamily. Cation-independent O-methyltransferase family. Homodimer in solution. Probably interacts transiently with PhzS.

The catalysed reaction is phenazine-1-carboxylate + S-adenosyl-L-methionine = 5-methyl-phenazine-1-carboxylate + S-adenosyl-L-homocysteine. It functions in the pathway secondary metabolite biosynthesis; pyocyanine biosynthesis. Its activity is regulated as follows. In vitro, requires PhzS for activity. In terms of biological role, involved in the biosynthesis of pyocyanine, a blue-pigmented phenazine derivative, which plays a role in virulence. Converts phenazine-1-carboxylate (PCA) to 5-methylphenazine-1-carboxylate (5-methyl-PCA). The chain is Phenazine-1-carboxylate N-methyltransferase from Pseudomonas aeruginosa (strain ATCC 15692 / DSM 22644 / CIP 104116 / JCM 14847 / LMG 12228 / 1C / PRS 101 / PAO1).